We begin with the raw amino-acid sequence, 510 residues long: NAD(P)H-quinone oxidoreductase subunit 2 A, chloroplastic (510 aa).

Transmembrane regions (helical) follow at residues 26–46 (LFDG…ILLL), 57–77 (ISWF…ALLF), 99–119 (IFQF…VEYI), 124–144 (MAIT…MFLC), 149–169 (LITI…LSGY), 183–203 (YLLM…WLYG), 227–247 (PGIL…LSPA), 295–315 (WHLL…LIAI), 323–343 (MLAY…IVGD), 354–374 (YMLF…SFGL), 395–415 (ALSL…SGFF), 418–438 (LHLF…IGLL), and 482–502 (LSMI…NPII).

The protein belongs to the complex I subunit 2 family. In terms of assembly, NDH is composed of at least 16 different subunits, 5 of which are encoded in the nucleus.

It localises to the plastid. Its subcellular location is the chloroplast thylakoid membrane. It carries out the reaction a plastoquinone + NADH + (n+1) H(+)(in) = a plastoquinol + NAD(+) + n H(+)(out). The enzyme catalyses a plastoquinone + NADPH + (n+1) H(+)(in) = a plastoquinol + NADP(+) + n H(+)(out). Functionally, NDH shuttles electrons from NAD(P)H:plastoquinone, via FMN and iron-sulfur (Fe-S) centers, to quinones in the photosynthetic chain and possibly in a chloroplast respiratory chain. The immediate electron acceptor for the enzyme in this species is believed to be plastoquinone. Couples the redox reaction to proton translocation, and thus conserves the redox energy in a proton gradient. The chain is NAD(P)H-quinone oxidoreductase subunit 2 A, chloroplastic from Glycine max (Soybean).